Consider the following 66-residue polypeptide: Large ribosomal subunit protein bL35 (66 aa).

The protein belongs to the bacterial ribosomal protein bL35 family.

The protein is Large ribosomal subunit protein bL35 of Caulobacter vibrioides (strain ATCC 19089 / CIP 103742 / CB 15) (Caulobacter crescentus).